The chain runs to 571 residues: Urease subunit alpha (571 aa).

The region spanning 134-571 (GAIDTHIHFI…LPMAQRYFLF (438 aa)) is the Urease domain. The Ni(2+) site is built by H139, H141, and K222. N6-carboxylysine is present on K222. Position 224 (H224) interacts with substrate. Residues H251 and H277 each coordinate Ni(2+). H325 acts as the Proton donor in catalysis. Ni(2+) is bound at residue D365.

Belongs to the metallo-dependent hydrolases superfamily. Urease alpha subunit family. As to quaternary structure, heterotrimer of UreA (gamma), UreB (beta) and UreC (alpha) subunits. Three heterotrimers associate to form the active enzyme. It depends on Ni cation as a cofactor. Carboxylation allows a single lysine to coordinate two nickel ions.

Its subcellular location is the cytoplasm. The enzyme catalyses urea + 2 H2O + H(+) = hydrogencarbonate + 2 NH4(+). The protein operates within nitrogen metabolism; urea degradation; CO(2) and NH(3) from urea (urease route): step 1/1. In Bordetella bronchiseptica (strain ATCC BAA-588 / NCTC 13252 / RB50) (Alcaligenes bronchisepticus), this protein is Urease subunit alpha.